Here is a 500-residue protein sequence, read N- to C-terminus: ADP,ATP carrier protein 5 (500 aa).

A run of 11 helical transmembrane segments spans residues 26 to 46 (LGKF…QNIL), 62 to 82 (IAGF…VIIY), 94 to 114 (IFYY…FVIY), 149 to 169 (YIVY…LLFW), 184 to 204 (FYTL…FLMM), 224 to 244 (ITLV…CCLL), 287 to 307 (LWLL…VEAV), 328 to 348 (LYIL…NNVM), 357 to 377 (AVIS…LIVF), 381 to 401 (ILSL…VSIG), and 469 to 489 (SISP…IYAV).

Belongs to the ADP/ATP translocase tlc family.

The protein localises to the cell membrane. Provides the rickettsial cell with host ATP in exchange for rickettsial ADP. This is an obligate exchange system. This energy acquiring activity is an important component of rickettsial parasitism. This is ADP,ATP carrier protein 5 (tlcE) from Rickettsia typhi (strain ATCC VR-144 / Wilmington).